The following is a 545-amino-acid chain: Glucose-6-phosphate isomerase (545 aa).

Catalysis depends on glutamate 353, which acts as the Proton donor. Active-site residues include histidine 384 and lysine 510.

Belongs to the GPI family.

It is found in the cytoplasm. It catalyses the reaction alpha-D-glucose 6-phosphate = beta-D-fructose 6-phosphate. Its pathway is carbohydrate biosynthesis; gluconeogenesis. The protein operates within carbohydrate degradation; glycolysis; D-glyceraldehyde 3-phosphate and glycerone phosphate from D-glucose: step 2/4. Functionally, catalyzes the reversible isomerization of glucose-6-phosphate to fructose-6-phosphate. This Aromatoleum aromaticum (strain DSM 19018 / LMG 30748 / EbN1) (Azoarcus sp. (strain EbN1)) protein is Glucose-6-phosphate isomerase.